The chain runs to 125 residues: U-scoloptoxin(05)-Er1a (125 aa).

Positions 1–20 (MLSLGVSIFLLVFLIPENSG) are cleaved as a signal peptide.

It belongs to the scoloptoxin-05 family. In terms of processing, contains 4 disulfide bonds. As to expression, expressed by the venom gland.

The protein localises to the secreted. The sequence is that of U-scoloptoxin(05)-Er1a from Ethmostigmus rubripes (Giant centipede).